Consider the following 441-residue polypeptide: NADH-quinone oxidoreductase subunit D 1 (441 aa).

This sequence belongs to the complex I 49 kDa subunit family. NDH-1 is composed of 14 different subunits. Subunits NuoB, C, D, E, F, and G constitute the peripheral sector of the complex.

It localises to the cell membrane. The catalysed reaction is a quinone + NADH + 5 H(+)(in) = a quinol + NAD(+) + 4 H(+)(out). Its function is as follows. NDH-1 shuttles electrons from NADH, via FMN and iron-sulfur (Fe-S) centers, to quinones in the respiratory chain. The immediate electron acceptor for the enzyme in this species is believed to be a menaquinone. Couples the redox reaction to proton translocation (for every two electrons transferred, four hydrogen ions are translocated across the cytoplasmic membrane), and thus conserves the redox energy in a proton gradient. This chain is NADH-quinone oxidoreductase subunit D 1, found in Salinispora tropica (strain ATCC BAA-916 / DSM 44818 / JCM 13857 / NBRC 105044 / CNB-440).